A 103-amino-acid chain; its full sequence is UPF0145 protein HH_1800 (103 aa).

Belongs to the UPF0145 family.

In Helicobacter hepaticus (strain ATCC 51449 / 3B1), this protein is UPF0145 protein HH_1800.